The primary structure comprises 103 residues: Isocitrate dehydrogenase [NAD] subunit beta, mitochondrial (103 aa).

Belongs to the isocitrate and isopropylmalate dehydrogenases family. Heterooligomer of subunits alpha (IDH3A), beta (IDH3B), and gamma (IDH3G) in the apparent ratio of 2:1:1. The heterodimer containing one IDH3A and one IDH3B subunit and the heterodimer containing one IDH3A and one IDH3G subunit assemble into a heterotetramer (which contains two subunits of IDH3A, one of IDH3B and one of IDH3G) and further into the heterooctamer.

Its subcellular location is the mitochondrion. The heterotetramer and the heterodimer composed of IDH3A and IDH3G subunits can be allosterically activated by citrate (CIT) or/and ADP, and the two activators can act independently or synergistically. The heterodimer composed of IDH3A and IDH3B subunits cannot be allosterically regulated and the allosteric regulation of the heterotetramer is through the IDH3G subunit and not the IDH3B subunit. The IDH3G subunit contains the allosteric site which consists of a CIT-binding site and an ADP-binding site, and the binding of CIT and ADP causes conformational changes at the allosteric site which are transmitted to the active site in the catalytic subunit (IDH3A) through a cascade of conformational changes at the heterodimer interface, leading to stabilization of the isocitrate-binding at the active site and thus activation of the enzyme. ATP can activate the heterotetramer and the heterodimer composed of IDH3A and IDH3G subunits at low concentrations but inhibits their activities at high concentrations, whereas ATP exhibits only inhibitory effect on the heterodimer composed of IDH3A and IDH3B subunits. Plays a structural role to facilitate the assembly and ensure the full activity of the enzyme catalyzing the decarboxylation of isocitrate (ICT) into alpha-ketoglutarate. The heterodimer composed of the alpha (IDH3A) and beta (IDH3B) subunits and the heterodimer composed of the alpha (IDH3A) and gamma (IDH3G) subunits, have considerable basal activity but the full activity of the heterotetramer (containing two subunits of IDH3A, one of IDH3B and one of IDH3G) requires the assembly and cooperative function of both heterodimers. The polypeptide is Isocitrate dehydrogenase [NAD] subunit beta, mitochondrial (IDH3B) (Sus scrofa (Pig)).